The sequence spans 1279 residues: Sterol regulatory element-binding protein cleavage-activating protein (1279 aa).

Topologically, residues 1–18 (MTLTERLREKISRAFYNH) are cytoplasmic. Residues 19–39 (GLLCASYPIPIILFTGFCILA) traverse the membrane as a helical segment. Residues 40–279 (CCYPLLKLPL…SLVHVHFKEE (240 aa)) are Lumenal-facing. A loop-1 region spans residues 46-284 (KLPLPGTGPV…HFKEEIGVAE (239 aa)). The segment at 60–80 (PVKDYSPPPVDSDRKQGEPTE) is disordered. Residue N263 is glycosylated (N-linked (GlcNAc...) asparagine). Residues 280–300 (IGVAELIPLVTTYIILFAYIY) traverse the membrane as a helical segment. The SSD domain maps to 284–442 (ELIPLVTTYI…MLFFTTVLSI (159 aa)). The Cytoplasmic portion of the chain corresponds to 301–312 (FSTRKIDMVKSK). A helical transmembrane segment spans residues 313–333 (WGLALAAVVTVLSSLLMSVGL). Over 334 to 344 (CTLFGLTPTLN) the chain is Lumenal. Residues 345–365 (GGEIFPYLVVVIGLENVLVLT) traverse the membrane as a helical segment. Residues 366–401 (KSVVSTPVDLEVKLRIAQGLSSESWSIMKNMATELG) are Cytoplasmic-facing. Residues 402–422 (IILIGYFTLVPAIQEFCLFAV) traverse the membrane as a helical segment. Position 423 (V423) is a topological domain, lumenal. Residues 424 to 444 (GLVSDFFLQMLFFTTVLSIDI) traverse the membrane as a helical segment. The Cytoplasmic portion of the chain corresponds to 445–518 (RRMELADLNK…FLARTRLAQR (74 aa)). Residues 447 to 452 (MELADL) carry the ER export signal motif. Residues K454 and K466 each participate in a glycyl lysine isopeptide (Lys-Gly) (interchain with G-Cter in ubiquitin) cross-link. A helical membrane pass occupies residues 519 to 539 (LIMAGTVVWIGILVYTDPAGL). Residues 535 to 710 (DPAGLRNYLA…QAHGDVTLYK (176 aa)) form a loop-7 region. Residues 540–709 (RNYLAAQVTE…VQAHGDVTLY (170 aa)) are Lumenal-facing. The segment at 579–615 (IFPPDAPKLPENQTSPGESPERGGPAEVVHDSPVPEV) is disordered. N-linked (GlcNAc...) asparagine glycans are attached at residues N590 and N641. A disordered region spans residues 668-696 (EGRHPQDGRSAWPPPGPIPAGHWEAGPKG). A helical membrane pass occupies residues 710–730 (KVAALGLATGIVLVLLLLCLY). At 731–1279 (RVLCPRNYGQ…YVPSVLEKLD (549 aa)) the chain is on the cytoplasmic side. An interaction with SREBF2 region spans residues 731–1279 (RVLCPRNYGQ…YVPSVLEKLD (549 aa)). The WD 1 repeat unit spans residues 771–811 (VLRGHLMDIECLASDGMLLVSCCLAGHVCVWDAQTGDCLTR). The disordered stretch occupies residues 811–904 (RIPRPGRQRR…PRHRAVCGRS (94 aa)). A phosphoserine mark is found at S822, S838, and S851. Residues 877–891 (IDTNFSAQPRSSQPT) show a composition bias toward polar residues. Phosphoserine is present on residues S907 and S937. The segment at 931 to 962 (PALRPPSPGPVLSQAPEDEGGSPEKGSPSLAW) is disordered. WD repeat units lie at residues 952-1002 (SPEK…LCCS) and 1005-1042 (EVSS…ALSP). R1051 carries the post-translational modification Omega-N-methylarginine. WD repeat units lie at residues 1077-1114 (AHQK…CLFT), 1117-1155 (GHSG…RVSH), 1158-1195 (AHRG…KFYS), and 1197-1235 (QQDL…LLQT).

Belongs to the WD repeat SCAP family. As to quaternary structure, membrane region forms a homotetramer. Component of the SCAP-SREBP complex (composed of SCAP and SREBF1/SREBP1 or SREBF2/SREBP2); interacts with SREBF1/SREBP1 or SREBF2/SREBP2 through its C-terminal cytoplasmic domain. Forms a ternary complex with INSIG1 or INSIG2 through its transmembrane domains at high sterol concentrations. Interacts with PAQR3; the interaction anchors the SCAP-SREBP complex to the Golgi apparatus in low cholesterol conditions. Interacts with the SEC23-SEC24 complex in a SAR1-GTP-dependent manner through an ER export signal in its third cytoplasmic loop. Interacts with RNF139; the interaction inhibits the interaction of SCAP with SEC24B and hampering the ER to Golgi transport of the SCAP-SREBP complex. Interacts with SPRING1. Post-translationally, ubiquitinated at Lys-454 and Lys-466. RNF145 triggers ubiquitination of SCAP, likely inhibiting SCAP-SREBP complex transport to the Golgi apparatus and the subsequent processing/maturation of SREBF2/SREBP2.

The protein localises to the endoplasmic reticulum membrane. It is found in the golgi apparatus membrane. Its subcellular location is the cytoplasmic vesicle. The protein resides in the COPII-coated vesicle membrane. Functionally, escort protein required for cholesterol as well as lipid homeostasis. Regulates export of the SCAP-SREBP complex from the endoplasmic reticulum to the Golgi upon low cholesterol, thereby regulating the processing of sterol regulatory element-binding proteins (SREBPs) SREBF1/SREBP1 and SREBF2/SREBP2. At high sterol concentrations, formation of a ternary complex with INSIG (INSIG1 or INSIG2) leads to mask the ER export signal in SCAP, promoting retention of the complex in the endoplasmic reticulum. Low sterol concentrations trigger release of INSIG, a conformational change in the SSD domain of SCAP, unmasking of the ER export signal, promoting recruitment into COPII-coated vesicles and transport of the SCAP-SREBP to the Golgi: in the Golgi, SREBPs are then processed, releasing the transcription factor fragment of SREBPs from the membrane, its import into the nucleus and up-regulation of LDLR, INSIG1 and the mevalonate pathway. Binds cholesterol via its SSD domain. This Homo sapiens (Human) protein is Sterol regulatory element-binding protein cleavage-activating protein.